Reading from the N-terminus, the 51-residue chain is Sec-independent protein translocase protein TatA (51 aa).

A helical membrane pass occupies residues 1 to 21; sequence MGMSFSHLLIILLIIFVLFGA.

Belongs to the TatA/E family. As to quaternary structure, the Tat system comprises two distinct complexes: a TatABC complex, containing multiple copies of TatA, TatB and TatC subunits, and a separate TatA complex, containing only TatA subunits. Substrates initially bind to the TatABC complex, which probably triggers association of the separate TatA complex to form the active translocon.

The protein resides in the cell inner membrane. Part of the twin-arginine translocation (Tat) system that transports large folded proteins containing a characteristic twin-arginine motif in their signal peptide across membranes. TatA could form the protein-conducting channel of the Tat system. The chain is Sec-independent protein translocase protein TatA from Rickettsia bellii (strain RML369-C).